The primary structure comprises 336 residues: Biotin synthase (336 aa).

One can recognise a Radical SAM core domain in the interval 54 to 281 (NAIQLSTLLS…KAMVRLSAGR (228 aa)). Residues Cys69, Cys73, and Cys76 each contribute to the [4Fe-4S] cluster site. [2Fe-2S] cluster-binding residues include Cys113, Cys144, Cys204, and Arg276.

It belongs to the radical SAM superfamily. Biotin synthase family. As to quaternary structure, homodimer. Requires [4Fe-4S] cluster as cofactor. [2Fe-2S] cluster serves as cofactor.

The enzyme catalyses (4R,5S)-dethiobiotin + (sulfur carrier)-SH + 2 reduced [2Fe-2S]-[ferredoxin] + 2 S-adenosyl-L-methionine = (sulfur carrier)-H + biotin + 2 5'-deoxyadenosine + 2 L-methionine + 2 oxidized [2Fe-2S]-[ferredoxin]. It participates in cofactor biosynthesis; biotin biosynthesis; biotin from 7,8-diaminononanoate: step 2/2. Its function is as follows. Catalyzes the conversion of dethiobiotin (DTB) to biotin by the insertion of a sulfur atom into dethiobiotin via a radical-based mechanism. The sequence is that of Biotin synthase from Burkholderia thailandensis (strain ATCC 700388 / DSM 13276 / CCUG 48851 / CIP 106301 / E264).